Reading from the N-terminus, the 416-residue chain is Serine hydroxymethyltransferase (416 aa).

Residues Leu-121 and 125 to 127 (GHL) contribute to the (6S)-5,6,7,8-tetrahydrofolate site. Lys-229 bears the N6-(pyridoxal phosphate)lysine mark. 354–356 (SPF) lines the (6S)-5,6,7,8-tetrahydrofolate pocket.

The protein belongs to the SHMT family. Homodimer. Pyridoxal 5'-phosphate is required as a cofactor.

Its subcellular location is the cytoplasm. The catalysed reaction is (6R)-5,10-methylene-5,6,7,8-tetrahydrofolate + glycine + H2O = (6S)-5,6,7,8-tetrahydrofolate + L-serine. It functions in the pathway one-carbon metabolism; tetrahydrofolate interconversion. It participates in amino-acid biosynthesis; glycine biosynthesis; glycine from L-serine: step 1/1. In terms of biological role, catalyzes the reversible interconversion of serine and glycine with tetrahydrofolate (THF) serving as the one-carbon carrier. This reaction serves as the major source of one-carbon groups required for the biosynthesis of purines, thymidylate, methionine, and other important biomolecules. Also exhibits THF-independent aldolase activity toward beta-hydroxyamino acids, producing glycine and aldehydes, via a retro-aldol mechanism. The polypeptide is Serine hydroxymethyltransferase (Halorhodospira halophila (strain DSM 244 / SL1) (Ectothiorhodospira halophila (strain DSM 244 / SL1))).